Reading from the N-terminus, the 628-residue chain is tRNA uridine 5-carboxymethylaminomethyl modification enzyme MnmG (628 aa).

FAD is bound at residue 13 to 18 (GAGHAG). Position 273–287 (273–287 (GPRYCPSIEDKIVRF)) interacts with NAD(+).

This sequence belongs to the MnmG family. Homodimer. Heterotetramer of two MnmE and two MnmG subunits. FAD is required as a cofactor.

Its subcellular location is the cytoplasm. NAD-binding protein involved in the addition of a carboxymethylaminomethyl (cmnm) group at the wobble position (U34) of certain tRNAs, forming tRNA-cmnm(5)s(2)U34. The chain is tRNA uridine 5-carboxymethylaminomethyl modification enzyme MnmG from Buchnera aphidicola subsp. Acyrthosiphon pisum (strain Tuc7).